The sequence spans 96 residues: U-scoloptoxin(06)-Sm1a (96 aa).

An N-terminal signal peptide occupies residues 1-23; that stretch reads MNSFSFFLVIFVVLNLQVAKLMA.

It belongs to the scoloptoxin-06 family. Post-translationally, contains 2 disulfide bonds. Expressed by the venom gland.

It localises to the secreted. The chain is U-scoloptoxin(06)-Sm1a from Scolopendra morsitans (Tanzanian blue ringleg centipede).